Consider the following 410-residue polypeptide: Protein king tubby 2 (410 aa).

Residues S48–Y72 show a composition bias toward polar residues. Disordered regions lie at residues S48–H109 and I121–V159. Residues S132 to E143 show a composition bias toward basic and acidic residues.

This sequence belongs to the TUB family.

It is found in the cytoplasm. The protein localises to the nucleus. This is Protein king tubby 2 (king-tubby2) from Aedes aegypti (Yellowfever mosquito).